A 179-amino-acid chain; its full sequence is Probable galaptin lec-7 (179 aa).

Residues 11–138 enclose the Galectin domain; it reads SVYQIEENLK…SVDIESIVFK (128 aa).

The sequence is that of Probable galaptin lec-7 (lec-7) from Caenorhabditis elegans.